We begin with the raw amino-acid sequence, 116 residues long: Venom nerve growth factor (116 aa).

3 cysteine pairs are disulfide-bonded: Cys14–Cys78, Cys56–Cys106, and Cys66–Cys108. Residue Lys86 participates in a 1,2-diacyl-sn-glycerol binding.

This sequence belongs to the NGF-beta family. In terms of assembly, homodimer; non-covalently linked. Interacts with NTRK1. In terms of processing, not glycosylated. Expressed by the venom gland.

The protein resides in the secreted. Nerve growth factor is important for the development and maintenance of the sympathetic and sensory nervous systems. It stimulates division and differentiation of sympathetic and embryonic sensory neurons as well as basal forebrain cholinergic neurons in the brain. Its relevance in the snake venom is not clear. However, it has been shown to inhibit metalloproteinase-dependent proteolysis of platelet glycoprotein Ib alpha, suggesting a metalloproteinase inhibition to prevent metalloprotease autodigestion and/or protection against prey proteases. Binds a lipid between the two protein chains in the homodimer. The lipid-bound form promotes histamine relase from mouse mast cells, contrary to the lipid-free form. The protein is Venom nerve growth factor of Naja atra (Chinese cobra).